A 309-amino-acid polypeptide reads, in one-letter code: Homoserine O-succinyltransferase (309 aa).

The active-site Acyl-thioester intermediate is Cys142. Lys163 and Ser192 together coordinate substrate. His235 (proton acceptor) is an active-site residue. Residue Glu237 is part of the active site. Arg249 contributes to the substrate binding site.

This sequence belongs to the MetA family.

Its subcellular location is the cytoplasm. It catalyses the reaction L-homoserine + succinyl-CoA = O-succinyl-L-homoserine + CoA. The protein operates within amino-acid biosynthesis; L-methionine biosynthesis via de novo pathway; O-succinyl-L-homoserine from L-homoserine: step 1/1. In terms of biological role, transfers a succinyl group from succinyl-CoA to L-homoserine, forming succinyl-L-homoserine. This is Homoserine O-succinyltransferase from Photorhabdus laumondii subsp. laumondii (strain DSM 15139 / CIP 105565 / TT01) (Photorhabdus luminescens subsp. laumondii).